Consider the following 287-residue polypeptide: Nitrogenase iron protein (287 aa).

Position 8–15 (8–15 (GKGGIGKS)) interacts with ATP. C96 is a binding site for [4Fe-4S] cluster. Position 99 is an ADP-ribosylarginine; by dinitrogenase reductase ADP-ribosyltransferase (R99). C130 serves as a coordination point for [4Fe-4S] cluster.

The protein belongs to the NifH/BchL/ChlL family. Homodimer. [4Fe-4S] cluster serves as cofactor. Post-translationally, the reversible ADP-ribosylation of Arg-99 inactivates the nitrogenase reductase and regulates nitrogenase activity.

The enzyme catalyses N2 + 8 reduced [2Fe-2S]-[ferredoxin] + 16 ATP + 16 H2O = H2 + 8 oxidized [2Fe-2S]-[ferredoxin] + 2 NH4(+) + 16 ADP + 16 phosphate + 6 H(+). The key enzymatic reactions in nitrogen fixation are catalyzed by the nitrogenase complex, which has 2 components: the iron protein and the molybdenum-iron protein. The sequence is that of Nitrogenase iron protein from Frankia casuarinae (strain DSM 45818 / CECT 9043 / HFP020203 / CcI3).